Consider the following 152-residue polypeptide: Lipoprotein signal peptidase (152 aa).

A run of 2 helical transmembrane segments spans residues 55–75 (NGRW…LYYL) and 87–107 (VALG…IATG). Catalysis depends on residues aspartate 111 and aspartate 129. Residues 125–145 (FNVADICVTVGVGLLFLHLVL) form a helical membrane-spanning segment.

It belongs to the peptidase A8 family.

It localises to the cell membrane. It carries out the reaction Release of signal peptides from bacterial membrane prolipoproteins. Hydrolyzes -Xaa-Yaa-Zaa-|-(S,diacylglyceryl)Cys-, in which Xaa is hydrophobic (preferably Leu), and Yaa (Ala or Ser) and Zaa (Gly or Ala) have small, neutral side chains.. It functions in the pathway protein modification; lipoprotein biosynthesis (signal peptide cleavage). Functionally, this protein specifically catalyzes the removal of signal peptides from prolipoproteins. This is Lipoprotein signal peptidase from Symbiobacterium thermophilum (strain DSM 24528 / JCM 14929 / IAM 14863 / T).